A 249-amino-acid chain; its full sequence is 4-hydroxy-tetrahydrodipicolinate reductase (249 aa).

NAD(+) contacts are provided by residues Asp32, 74–76 (GTT), and 99–102 (SANF). His134 functions as the Proton donor/acceptor in the catalytic mechanism. Residue His135 participates in (S)-2,3,4,5-tetrahydrodipicolinate binding. Residue Lys138 is the Proton donor of the active site. 144 to 145 (GT) is a (S)-2,3,4,5-tetrahydrodipicolinate binding site.

It belongs to the DapB family.

It is found in the cytoplasm. The enzyme catalyses (S)-2,3,4,5-tetrahydrodipicolinate + NAD(+) + H2O = (2S,4S)-4-hydroxy-2,3,4,5-tetrahydrodipicolinate + NADH + H(+). It catalyses the reaction (S)-2,3,4,5-tetrahydrodipicolinate + NADP(+) + H2O = (2S,4S)-4-hydroxy-2,3,4,5-tetrahydrodipicolinate + NADPH + H(+). The protein operates within amino-acid biosynthesis; L-lysine biosynthesis via DAP pathway; (S)-tetrahydrodipicolinate from L-aspartate: step 4/4. Functionally, catalyzes the conversion of 4-hydroxy-tetrahydrodipicolinate (HTPA) to tetrahydrodipicolinate. This chain is 4-hydroxy-tetrahydrodipicolinate reductase, found in Chlorobaculum parvum (strain DSM 263 / NCIMB 8327) (Chlorobium vibrioforme subsp. thiosulfatophilum).